The chain runs to 129 residues: Lysozyme C (129 aa).

The region spanning 1–129 (KIYKRCELAA…VSTWIKDCKL (129 aa)) is the C-type lysozyme domain. Cystine bridges form between cysteine 6-cysteine 127, cysteine 30-cysteine 115, cysteine 64-cysteine 80, and cysteine 76-cysteine 94. Catalysis depends on residues glutamate 35 and aspartate 52.

This sequence belongs to the glycosyl hydrolase 22 family. As to quaternary structure, monomer.

It localises to the secreted. The catalysed reaction is Hydrolysis of (1-&gt;4)-beta-linkages between N-acetylmuramic acid and N-acetyl-D-glucosamine residues in a peptidoglycan and between N-acetyl-D-glucosamine residues in chitodextrins.. Functionally, lysozymes have primarily a bacteriolytic function; those in tissues and body fluids are associated with the monocyte-macrophage system and enhance the activity of immunoagents. The sequence is that of Lysozyme C (LYZ) from Ortalis vetula (Plain chachalaca).